The primary structure comprises 476 residues: MEQPHAAAAAAGGGEGEGGASPDTGLEGPMWRMGLGGGGGGGGGGGGGDGDAAGRLPERPGEEDCVYYLRTGACGFGDRCRYNHPRDRGGTEFGGGARNAAALDYPERAGQPICEYYMKTGTCKFGTNCKYHHPKQDGAVLPVMLNNSGFPIRLGEKECSYYMKTGQCKFGTTCKFHHPEFGGVPMTPGIYPPLQSPSIASPHPYASLANWQMGRPPVVPGSYIPGSYTPMMLSSGMIPLQGWSPYPASVNPVVSGGAQQNVQAGPVYGMGHHGSSSTIAYGGPYVPYASSTGQSSNNQQEHGFPERPGQPDCQYYMRTGDCKFGATCKYHHPRELSAPKSGYMVNSLCLPLRPGAQPCAYYAQNGYCRYGVACKYDHPMGTLGYSPSALPLSDMPIAPYPIGFSIATLAPSSPSPDLRPEYISTKDQSVNQVTSPVAASEPVGSILPKGVFPADTMMRAQTNTTSGGSSSPGGGR.

The span at 1-10 shows a compositional bias: low complexity; sequence MEQPHAAAAA. Positions 1-57 are disordered; the sequence is MEQPHAAAAAAGGGEGEGGASPDTGLEGPMWRMGLGGGGGGGGGGGGGDGDAAGRLP. Residues 34–51 are compositionally biased toward gly residues; it reads GLGGGGGGGGGGGGGDGD. C3H1-type zinc fingers lie at residues 59 to 87, 108 to 136, and 153 to 181; these read RPGE…HPRD, RAGQ…HPKQ, and RLGE…HPEF. Residues 290–301 are compositionally biased toward polar residues; it reads SSTGQSSNNQQE. Residues 290–309 are disordered; sequence SSTGQSSNNQQEHGFPERPG. 2 consecutive C3H1-type zinc fingers follow at residues 307–335 and 353–381; these read RPGQ…HPRE and RPGA…HPMG. The segment at 456 to 476 is disordered; that stretch reads TMMRAQTNTTSGGSSSPGGGR.

It is found in the nucleus. In Oryza sativa subsp. japonica (Rice), this protein is Zinc finger CCCH domain-containing protein 6.